Consider the following 516-residue polypeptide: Na(+)/H(+) antiporter NhaB (516 aa).

12 helical membrane-spanning segments follow: residues 23–43 (LALIIFLIVNPLVFAVAPFVA), 61–80 (CYPLLPGGLLAIEALLIGMT), 97–117 (LLLIFMVAGIYFMKQLLLFVF), 120–140 (LLLGIRSKMLLSLAFCLAAAF), 144–164 (FLDALTVVAVVISVAVGFYGI), 202–222 (LMMHAGVGTALGGVMTMVGEP), 238–258 (FFIRMAPVTVPVMVCGLLTCL), 303–323 (AVIGVWLIVALAFHLAEVGLI), 348–368 (TEALPFTALLTVFFAIVAVII), 391–411 (LFYLFNGLLSSISDNVFVGTV), 447–467 (ATPNGQAAFLFLLTSALAPLI), and 475–495 (VWMALPYTLVLTLVGLLCVEF).

This sequence belongs to the NhaB Na(+)/H(+) (TC 2.A.34) antiporter family.

Its subcellular location is the cell inner membrane. It carries out the reaction 2 Na(+)(in) + 3 H(+)(out) = 2 Na(+)(out) + 3 H(+)(in). Functionally, na(+)/H(+) antiporter that extrudes sodium in exchange for external protons. The chain is Na(+)/H(+) antiporter NhaB from Klebsiella pneumoniae (strain 342).